We begin with the raw amino-acid sequence, 209 residues long: Ribose 1,5-bisphosphate phosphokinase PhnN (209 aa).

G27 to D34 contributes to the ATP binding site.

It belongs to the ribose 1,5-bisphosphokinase family.

The enzyme catalyses alpha-D-ribose 1,5-bisphosphate + ATP = 5-phospho-alpha-D-ribose 1-diphosphate + ADP. Its pathway is metabolic intermediate biosynthesis; 5-phospho-alpha-D-ribose 1-diphosphate biosynthesis; 5-phospho-alpha-D-ribose 1-diphosphate from D-ribose 5-phosphate (route II): step 3/3. In terms of biological role, catalyzes the phosphorylation of ribose 1,5-bisphosphate to 5-phospho-D-ribosyl alpha-1-diphosphate (PRPP). The sequence is that of Ribose 1,5-bisphosphate phosphokinase PhnN from Chelativorans sp. (strain BNC1).